Consider the following 178-residue polypeptide: Nascent polypeptide-associated complex subunit alpha (178 aa).

The region spanning 16–80 (PKNEKKAREL…AKVDDMNQRI (65 aa)) is the NAC-A/B domain. Over residues 82 to 100 (EAQAQQAQQEALQKAAADA) the composition is skewed to low complexity. The segment at 82 to 145 (EAQAQQAQQE…DETGLDPKDI (64 aa)) is disordered. Positions 101-126 (GKTEDKSPEAITADLEKASLGDKKAE) are enriched in basic and acidic residues. Acidic residues predominate over residues 127-139 (DEEEDEGEIDETG). The UBA domain occupies 140-178 (LDPKDIEIVVEQTQVSRAKAVKALRNHDGDMVNAIMDLS).

This sequence belongs to the NAC-alpha family. As to quaternary structure, part of the nascent polypeptide-associated complex (NAC), consisting of EGD2 and EGD1. NAC associates with ribosomes via EGD1.

The protein resides in the cytoplasm. The protein localises to the nucleus. Its function is as follows. Component of the nascent polypeptide-associated complex (NAC), a dynamic component of the ribosomal exit tunnel, protecting the emerging polypeptides from interaction with other cytoplasmic proteins to ensure appropriate nascent protein targeting. The NAC complex also promotes mitochondrial protein import by enhancing productive ribosome interactions with the outer mitochondrial membrane and blocks the inappropriate interaction of ribosomes translating non-secretory nascent polypeptides with translocation sites in the membrane of the endoplasmic reticulum. EGD2 may also be involved in transcription regulation. In Candida albicans (strain SC5314 / ATCC MYA-2876) (Yeast), this protein is Nascent polypeptide-associated complex subunit alpha (EGD2).